We begin with the raw amino-acid sequence, 85 residues long: Phycobilisome 9.7 kDa linker polypeptide, phycocyanin-associated, rod (85 aa).

The CpcD-like domain occupies 16-74; sequence NRVFVYEVEGLRQNEQTDNNRYQIRNSSTIEIQVPYSRMNEEDRRITRLGGRIVNIRPA.

It belongs to the phycobilisome linker protein family.

The protein localises to the cellular thylakoid membrane. In terms of biological role, rod linker protein, associated with phycocyanin. Linker polypeptides determine the state of aggregation and the location of the disk-shaped phycobiliprotein units within the phycobilisome and modulate their spectroscopic properties in order to mediate a directed and optimal energy transfer. The protein is Phycobilisome 9.7 kDa linker polypeptide, phycocyanin-associated, rod (cpcD2) of Microchaete diplosiphon (Fremyella diplosiphon).